The chain runs to 236 residues: LexA repressor (236 aa).

The disordered stretch occupies residues methionine 1–serine 25. Residues isoleucine 51–arginine 71 constitute a DNA-binding region (H-T-H motif). Catalysis depends on for autocatalytic cleavage activity residues serine 160 and lysine 197.

This sequence belongs to the peptidase S24 family. In terms of assembly, homodimer.

The enzyme catalyses Hydrolysis of Ala-|-Gly bond in repressor LexA.. Its function is as follows. Represses a number of genes involved in the response to DNA damage (SOS response), including recA and lexA. In the presence of single-stranded DNA, RecA interacts with LexA causing an autocatalytic cleavage which disrupts the DNA-binding part of LexA, leading to derepression of the SOS regulon and eventually DNA repair. In Mycobacterium tuberculosis (strain ATCC 25177 / H37Ra), this protein is LexA repressor.